A 67-amino-acid polypeptide reads, in one-letter code: Probable Sec-independent protein translocase protein TatE (67 aa).

A helical membrane pass occupies residues 4 to 21 (ISITKLLVVAALVVLLFG). A disordered region spans residues 46–67 (EDAGAKKEAGGDIQAEKLSHKE).

This sequence belongs to the TatA/E family. TatE subfamily.

The protein resides in the cell inner membrane. In terms of biological role, part of the twin-arginine translocation (Tat) system that transports large folded proteins containing a characteristic twin-arginine motif in their signal peptide across membranes. TatE shares overlapping functions with TatA. In Citrobacter koseri (strain ATCC BAA-895 / CDC 4225-83 / SGSC4696), this protein is Probable Sec-independent protein translocase protein TatE.